A 69-amino-acid chain; its full sequence is Large ribosomal subunit protein bL31 (69 aa).

Zn(2+)-binding residues include Cys-17, Cys-19, Cys-37, and Cys-40.

The protein belongs to the bacterial ribosomal protein bL31 family. Type A subfamily. As to quaternary structure, part of the 50S ribosomal subunit. Zn(2+) serves as cofactor.

Its function is as follows. Binds the 23S rRNA. In Caldanaerobacter subterraneus subsp. tengcongensis (strain DSM 15242 / JCM 11007 / NBRC 100824 / MB4) (Thermoanaerobacter tengcongensis), this protein is Large ribosomal subunit protein bL31.